The primary structure comprises 20 residues: Collagenolytic protease 28 kDa (20 aa).

The region spanning 1–20 is the Peptidase S1 domain; the sequence is IVGGQEASPGSWPXQVGLFF.

Belongs to the peptidase S1 family.

It catalyses the reaction Hydrolysis of proteins, with broad specificity for peptide bonds. Native collagen is cleaved about 75% of the length of the molecule from the N-terminus. Low activity on small molecule substrates of both trypsin and chymotrypsin.. Its function is as follows. This enzyme is a serine protease capable of degrading the native triple helix of collagen. The chain is Collagenolytic protease 28 kDa from Paralithodes camtschaticus (Red king crab).